The primary structure comprises 450 residues: uncharacterized protein (450 aa).

The region spanning 1-58 (MAKGEIVTVKIEEMDFKGYGVGYCEGKPLKVRGGILGQRVAVRVKKGKKGRAEGEIVE) is the TRAM domain. The [4Fe-4S] cluster site is built by C71, C77, C80, and C159. S-adenosyl-L-methionine is bound by residues Q285, Y314, E335, and D380. C407 serves as the catalytic Nucleophile.

The protein belongs to the class I-like SAM-binding methyltransferase superfamily. RNA M5U methyltransferase family.

This is an uncharacterized protein from Caldanaerobacter subterraneus subsp. tengcongensis (strain DSM 15242 / JCM 11007 / NBRC 100824 / MB4) (Thermoanaerobacter tengcongensis).